Consider the following 189-residue polypeptide: Probable nicotinate-nucleotide adenylyltransferase (189 aa).

It belongs to the NadD family.

The enzyme catalyses nicotinate beta-D-ribonucleotide + ATP + H(+) = deamido-NAD(+) + diphosphate. Its pathway is cofactor biosynthesis; NAD(+) biosynthesis; deamido-NAD(+) from nicotinate D-ribonucleotide: step 1/1. Functionally, catalyzes the reversible adenylation of nicotinate mononucleotide (NaMN) to nicotinic acid adenine dinucleotide (NaAD). This chain is Probable nicotinate-nucleotide adenylyltransferase, found in Staphylococcus aureus (strain MRSA252).